We begin with the raw amino-acid sequence, 145 residues long: UPF0260 protein VS_0923 (145 aa).

This sequence belongs to the UPF0260 family.

In Vibrio atlanticus (strain LGP32) (Vibrio splendidus (strain Mel32)), this protein is UPF0260 protein VS_0923.